The chain runs to 147 residues: Protein YjdN (147 aa).

In Escherichia coli (strain K12), this protein is Protein YjdN (yjdN).